The following is a 267-amino-acid chain: Lectin SfL-2 (267 aa).

Tandem repeats lie at residues 1–67 (GRYT…RRGE), 68–135 (SNNY…QAEG), 136–202 (DTYN…LTGA), and 203–267 (NNYK…GVAN). The tract at residues 1-267 (GRYTVQNQWG…GPIGFKGVAN (267 aa)) is 4 X approximate tandem repeats.

In terms of assembly, monomer.

Its function is as follows. Lectin specific for high mannose N-glycans, recognizes the branched moiety of these glycans. Does not recognize other types of N-glycans or monosaccharides. The chain is Lectin SfL-2 from Solieria filiformis (Red alga).